Here is a 144-residue protein sequence, read N- to C-terminus: Large ribosomal subunit protein uL16 (144 aa).

Positions 1–14 are enriched in basic residues; it reads MLTPKRVKHRKQHR. Residues 1-22 form a disordered region; the sequence is MLTPKRVKHRKQHRPSLAGKAN.

It belongs to the universal ribosomal protein uL16 family. As to quaternary structure, part of the 50S ribosomal subunit.

In terms of biological role, binds 23S rRNA and is also seen to make contacts with the A and possibly P site tRNAs. The protein is Large ribosomal subunit protein uL16 of Syntrophomonas wolfei subsp. wolfei (strain DSM 2245B / Goettingen).